The chain runs to 421 residues: Magnesium transporter MRS2-5 (421 aa).

Transmembrane regions (helical) follow at residues 357–377 (LLLTAATFVAAIFAAVTAVFG) and 393–413 (YVLLITGIGCGFLYFGFVLYF). The short motif at 377-379 (GMN) is the Required for magnesium transport activity element.

The protein belongs to the CorA metal ion transporter (MIT) (TC 1.A.35.5) family. In terms of tissue distribution, expressed in the whole plant.

Its subcellular location is the membrane. Functionally, magnesium transporter that may mediate the influx of magnesium. This Arabidopsis thaliana (Mouse-ear cress) protein is Magnesium transporter MRS2-5 (MRS2-5).